The chain runs to 62 residues: Pro-MCH variant (62 aa).

The tract at residues 23–41 (GSVAFPAENGVQDTESTQE) is NGE-like. The segment at 28-62 (PAENGVQDTESTQEKRETGDEENSAQFPIGRRDFD) is disordered. The NEI-like stretch occupies residues 44–56 (ETGDEENSAQFPI). The segment at 60–62 (DFD) is melanin-concentrating hormone-like.

It belongs to the melanin-concentrating hormone family.

The protein is Pro-MCH variant (PMCHL1) of Hylobates lar (Lar gibbon).